The sequence spans 55 residues: Large ribosomal subunit protein bL33 (55 aa).

Basic and acidic residues predominate over residues 1–11 (MAKGARDKIKL). The disordered stretch occupies residues 1–24 (MAKGARDKIKLESTAGTGHFYTTT). Residues 14–24 (TAGTGHFYTTT) show a composition bias toward polar residues.

This sequence belongs to the bacterial ribosomal protein bL33 family.

This Burkholderia multivorans (strain ATCC 17616 / 249) protein is Large ribosomal subunit protein bL33.